Reading from the N-terminus, the 117-residue chain is Protein Wnt-6 (117 aa).

Ser-1 is lipidated: O-palmitoleoyl serine; by PORCN. Cys-83 and Cys-98 are joined by a disulfide. Asn-84 is a glycosylation site (N-linked (GlcNAc...) asparagine).

The protein belongs to the Wnt family. Post-translationally, palmitoleoylation is required for efficient binding to frizzled receptors. Depalmitoleoylation leads to Wnt signaling pathway inhibition.

The protein resides in the secreted. Its subcellular location is the extracellular space. It is found in the extracellular matrix. In terms of biological role, ligand for members of the frizzled family of seven transmembrane receptors. Probable developmental protein. May be a signaling molecule which affects the development of discrete regions of tissues. Is likely to signal over only few cell diameters. In Plethodon jordani (Red-cheeked salamander), this protein is Protein Wnt-6 (WNT-6).